A 764-amino-acid polypeptide reads, in one-letter code: MGAKDDKKRVKKLKSKKLEAEEELNNVQEIDAHDIVMEQKSDKKRGKKVKSKKAEAEEHEEELKRLQEKDPDFFQYMKEHDAELLKFDATEIEDDADVEPDTDLEDTEKEGDDEATKMEIAKKVHVQKTITASMVDAWSKSIEDEAKLGGVRSILRAYRTACHYGDDTGDDQSTKFSVMSSEVFNKIMIYVLSEMDGILRKLLRFPEDTRGTKETILELTNTRPWKNYNHLVKSYLGNSLHVLNQMTDTEMITFTLRRLKHSSVFLAAFPSLLRKYIKVALHFWGTGSGALPVVSLLFLRDLCIRLGSDCVDDCFKGMYKAYVLNCQFVNADKLKHISFLGNCFIELLGTDISAAYQHAFVFIRQLAMILREALNTKTKEAFRKVYQWKFIHCLELWTGAVCAYSSQSELRPVAYPLAQIITGVARLVPTARYTPLRLRCVRMLNRLAAATGTFIPVSMLLVDMLEMKELNRPPTGGVGKGVDLRTLLKVSKPAVKTRAFQEACVYTVVEELVEHLSQWSCSVAFFELSFIPTIRLRSFCKSTKAERFRKEMKQLISQIEANSEFVNKKRALIKFLPNDLAAESFLEDEKKAGKTPLLQYAEIIRQRAQQRNESLVESDVIVGENSAVFGKNAPSSDDEDDEDRMEKGAAAFNSSWLPGSDSKEKEPEEEKTKKKKRKRGGKSKTEKKQDEQGLGEDDVVEDFVLSSDEEEEDLFDIGGDKDEDDAVDEIADPETKTSKKTKGTYKTWHKAYKKTKKKKARVAS.

Residues 3–69 (AKDDKKRVKK…EEELKRLQEK (67 aa)) are a coiled coil. 4 disordered regions span residues 23–67 (ELNN…KRLQ), 89–113 (ATEI…EGDD), 627–646 (AVFG…DRME), and 651–726 (AFNS…EDDA). The segment covering 30–41 (IDAHDIVMEQKS) has biased composition (basic and acidic residues). A compositionally biased stretch (basic residues) spans 42 to 51 (DKKRGKKVKS). The segment covering 52 to 67 (KKAEAEEHEEELKRLQ) has biased composition (basic and acidic residues). Over residues 90 to 113 (TEIEDDADVEPDTDLEDTEKEGDD) the composition is skewed to acidic residues. Basic and acidic residues predominate over residues 661–672 (DSKEKEPEEEKT). The short motif at 673-680 (KKKKRKRG) is the Nuclear localization signal 1 element. Positions 673 to 682 (KKKKRKRGGK) are enriched in basic residues. Acidic residues predominate over residues 693–726 (GLGEDDVVEDFVLSSDEEEEDLFDIGGDKDEDDA). Positions 738–745 (SKKTKGTY) match the Nuclear localization signal 2 motif.

The protein belongs to the NOC2 family. As to quaternary structure, component of nucleolar complexes. Forms homodimers. Interacts with RBL and NOC3 in both the nucleolus and nucleoplasm. Binds to SWA2.

Its subcellular location is the nucleus. The protein resides in the nucleolus. It localises to the nucleoplasm. Its function is as follows. Together with SWA2, probably involved in pre-ribosome export from the nucleus to the cytoplasm. The chain is Nucleolar complex-associated protein 2 from Arabidopsis thaliana (Mouse-ear cress).